A 422-amino-acid polypeptide reads, in one-letter code: Serine hydroxymethyltransferase (422 aa).

(6S)-5,6,7,8-tetrahydrofolate-binding positions include Leu-118 and 122-124; that span reads GHL. An N6-(pyridoxal phosphate)lysine modification is found at Lys-227. Residues Glu-243 and 351-353 contribute to the (6S)-5,6,7,8-tetrahydrofolate site; that span reads SPF.

This sequence belongs to the SHMT family. Homodimer. Pyridoxal 5'-phosphate is required as a cofactor.

The protein resides in the cytoplasm. The enzyme catalyses (6R)-5,10-methylene-5,6,7,8-tetrahydrofolate + glycine + H2O = (6S)-5,6,7,8-tetrahydrofolate + L-serine. It participates in one-carbon metabolism; tetrahydrofolate interconversion. Its pathway is amino-acid biosynthesis; glycine biosynthesis; glycine from L-serine: step 1/1. Its function is as follows. Catalyzes the reversible interconversion of serine and glycine with tetrahydrofolate (THF) serving as the one-carbon carrier. This reaction serves as the major source of one-carbon groups required for the biosynthesis of purines, thymidylate, methionine, and other important biomolecules. Also exhibits THF-independent aldolase activity toward beta-hydroxyamino acids, producing glycine and aldehydes, via a retro-aldol mechanism. This Kosmotoga olearia (strain ATCC BAA-1733 / DSM 21960 / TBF 19.5.1) protein is Serine hydroxymethyltransferase.